The sequence spans 58 residues: Photosystem II reaction center X protein (58 aa).

Residues 27 to 47 (IGSFLAAAAFIVVPAASFLIW) traverse the membrane as a helical segment.

This sequence belongs to the PsbX family. Type 2 subfamily. In terms of assembly, PSII consists of a core antenna complex that captures photons, and an electron transfer chain that converts photonic excitation into a charge separation. PSII forms dimeric complexes.

It is found in the cellular thylakoid membrane. Functionally, involved in the binding and/or turnover of quinones at the Q(B) site of Photosystem II. In Prochlorococcus marinus (strain MIT 9211), this protein is Photosystem II reaction center X protein.